The following is a 412-amino-acid chain: Serine hydroxymethyltransferase (412 aa).

(6S)-5,6,7,8-tetrahydrofolate contacts are provided by residues leucine 117 and 121–123; that span reads GHL. Lysine 226 is modified (N6-(pyridoxal phosphate)lysine). (6S)-5,6,7,8-tetrahydrofolate is bound by residues glutamate 242 and 350-352; that span reads SPF.

It belongs to the SHMT family. In terms of assembly, homodimer. Requires pyridoxal 5'-phosphate as cofactor.

It is found in the cytoplasm. The catalysed reaction is (6R)-5,10-methylene-5,6,7,8-tetrahydrofolate + glycine + H2O = (6S)-5,6,7,8-tetrahydrofolate + L-serine. It participates in one-carbon metabolism; tetrahydrofolate interconversion. The protein operates within amino-acid biosynthesis; glycine biosynthesis; glycine from L-serine: step 1/1. Its function is as follows. Catalyzes the reversible interconversion of serine and glycine with tetrahydrofolate (THF) serving as the one-carbon carrier. Appears to be specific for THF as the pteridine substrate, since the use of tetrahydromethanopterin (H4MPT) is much less efficient. Also exhibits THF-independent aldolase activity toward beta-hydroxyamino acids, producing glycine and aldehydes, via a retro-aldol mechanism. Thus, is able to catalyze the cleavage of L-allo-threonine and L-threo-beta-phenylserine. The chain is Serine hydroxymethyltransferase from Methanosarcina barkeri (strain Fusaro / DSM 804).